Here is a 256-residue protein sequence, read N- to C-terminus: Ubiquinone/menaquinone biosynthesis C-methyltransferase UbiE (256 aa).

The span at 1 to 12 (MTDPRKGDHAEP) shows a compositional bias: basic and acidic residues. Positions 1–21 (MTDPRKGDHAEPTTHFGYQDV) are disordered. Residues threonine 79, aspartate 100, and 128–129 (DA) contribute to the S-adenosyl-L-methionine site.

It belongs to the class I-like SAM-binding methyltransferase superfamily. MenG/UbiE family.

The enzyme catalyses a 2-demethylmenaquinol + S-adenosyl-L-methionine = a menaquinol + S-adenosyl-L-homocysteine + H(+). The catalysed reaction is a 2-methoxy-6-(all-trans-polyprenyl)benzene-1,4-diol + S-adenosyl-L-methionine = a 5-methoxy-2-methyl-3-(all-trans-polyprenyl)benzene-1,4-diol + S-adenosyl-L-homocysteine + H(+). Its pathway is quinol/quinone metabolism; menaquinone biosynthesis; menaquinol from 1,4-dihydroxy-2-naphthoate: step 2/2. The protein operates within cofactor biosynthesis; ubiquinone biosynthesis. Its function is as follows. Methyltransferase required for the conversion of demethylmenaquinol (DMKH2) to menaquinol (MKH2) and the conversion of 2-polyprenyl-6-methoxy-1,4-benzoquinol (DDMQH2) to 2-polyprenyl-3-methyl-6-methoxy-1,4-benzoquinol (DMQH2). The protein is Ubiquinone/menaquinone biosynthesis C-methyltransferase UbiE of Pseudomonas entomophila (strain L48).